Here is a 177-residue protein sequence, read N- to C-terminus: Secretion monitor (177 aa).

Positions 1–37 (MIGILNRWRQFGRRYFWPHLLLGMVAASLGVPSNLSG) are cleaved as a signal peptide.

The protein belongs to the SecM family.

The protein resides in the cytoplasm. Its subcellular location is the cytosol. The protein localises to the periplasm. In terms of biological role, regulates secA expression by translational coupling of the secM secA operon. Translational pausing at a specific Pro residue 5 residues before the end of the protein may allow disruption of a mRNA repressor helix that normally suppresses secA translation initiation. This Yersinia pseudotuberculosis serotype O:1b (strain IP 31758) protein is Secretion monitor.